Reading from the N-terminus, the 435-residue chain is ATP-dependent protease ATPase subunit HslU (435 aa).

Residues Val-18, 60-65, Asp-248, Glu-313, and Arg-385 each bind ATP; that span reads GVGKTE.

This sequence belongs to the ClpX chaperone family. HslU subfamily. A double ring-shaped homohexamer of HslV is capped on each side by a ring-shaped HslU homohexamer. The assembly of the HslU/HslV complex is dependent on binding of ATP.

The protein localises to the cytoplasm. ATPase subunit of a proteasome-like degradation complex; this subunit has chaperone activity. The binding of ATP and its subsequent hydrolysis by HslU are essential for unfolding of protein substrates subsequently hydrolyzed by HslV. HslU recognizes the N-terminal part of its protein substrates and unfolds these before they are guided to HslV for hydrolysis. In Parvibaculum lavamentivorans (strain DS-1 / DSM 13023 / NCIMB 13966), this protein is ATP-dependent protease ATPase subunit HslU.